Reading from the N-terminus, the 388-residue chain is Venom acid phosphatase Acph-1 (388 aa).

The first 15 residues, 1–15, serve as a signal peptide directing secretion; sequence MSVIAILAMVVGVQA. H26 (nucleophile) is an active-site residue. Cystine bridges form between C145-C355 and C330-C334. Residues N182 and N228 are each glycosylated (N-linked (GlcNAc...) asparagine). E273 serves as the catalytic Proton donor. N366 is a glycosylation site (N-linked (GlcNAc...) asparagine).

Belongs to the histidine acid phosphatase family. As to expression, expressed by the venom gland.

It localises to the secreted. The enzyme catalyses a phosphate monoester + H2O = an alcohol + phosphate. This is Venom acid phosphatase Acph-1 from Apis mellifera (Honeybee).